A 148-amino-acid chain; its full sequence is 3-hydroxyacyl-[acyl-carrier-protein] dehydratase FabZ (148 aa).

His49 is a catalytic residue.

It belongs to the thioester dehydratase family. FabZ subfamily.

It localises to the cytoplasm. The enzyme catalyses a (3R)-hydroxyacyl-[ACP] = a (2E)-enoyl-[ACP] + H2O. In terms of biological role, involved in unsaturated fatty acids biosynthesis. Catalyzes the dehydration of short chain beta-hydroxyacyl-ACPs and long chain saturated and unsaturated beta-hydroxyacyl-ACPs. In Ehrlichia canis (strain Jake), this protein is 3-hydroxyacyl-[acyl-carrier-protein] dehydratase FabZ.